Consider the following 167-residue polypeptide: Photosystem II extrinsic protein V (167 aa).

Residues 1 to 30 (MVFKTLRRTLWLTLAALLAVFQFNLGAAQA) form the signal peptide. 4 residues coordinate heme c: cysteine 67, cysteine 70, histidine 71, and histidine 122.

It belongs to the cytochrome c family. PsbV subfamily. In terms of assembly, PSII is composed of 1 copy each of membrane proteins PsbA, PsbB, PsbC, PsbD, PsbE, PsbF, PsbH, PsbI, PsbJ, PsbK, PsbL, PsbM, PsbT, PsbX, PsbY, PsbZ, Psb30/Ycf12, peripheral proteins PsbO, CyanoQ (PsbQ), PsbU, PsbV and a large number of cofactors. It forms dimeric complexes. Heme c serves as cofactor.

The protein resides in the cellular thylakoid membrane. In terms of biological role, one of the extrinsic, lumenal subunits of photosystem II (PSII). PSII is a light-driven water plastoquinone oxidoreductase, using light energy to abstract electrons from H(2)O, generating a proton gradient subsequently used for ATP formation. The extrinsic proteins stabilize the structure of photosystem II oxygen-evolving complex (OEC), the ion environment of oxygen evolution and protect the OEC against heat-induced inactivation. Low-potential cytochrome c that plays a role in the OEC of PSII. In Synechococcus elongatus (strain ATCC 33912 / PCC 7942 / FACHB-805) (Anacystis nidulans R2), this protein is Photosystem II extrinsic protein V.